Consider the following 210-residue polypeptide: Putative 3-methyladenine DNA glycosylase (210 aa).

Positions 180 to 210 are disordered; the sequence is SRPPPGAAAARAARAPAAPAPRPRRPRGSGP. The segment covering 186-196 has biased composition (low complexity); the sequence is AAAARAARAPA. Over residues 201–210 the composition is skewed to basic residues; sequence RPRRPRGSGP.

It belongs to the DNA glycosylase MPG family.

In Anaeromyxobacter dehalogenans (strain 2CP-1 / ATCC BAA-258), this protein is Putative 3-methyladenine DNA glycosylase.